We begin with the raw amino-acid sequence, 193 residues long: Non-specific lipid transfer protein GPI-anchored 10 (193 aa).

The signal sequence occupies residues 1–24; it reads MASSTLLITLLISLSAFFLRMVLA. Cystine bridges form between Cys-30/Cys-71, Cys-40/Cys-55, Cys-56/Cys-98, and Cys-69/Cys-107. Residues Asn-76, Asn-87, and Asn-103 are each glycosylated (N-linked (GlcNAc...) asparagine). A disordered region spans residues 109 to 140; that stretch reads SSFPGEAPSDSSSVAPPPSSSTGSQISQGAKN. Residues 116–132 show a composition bias toward low complexity; sequence PSDSSSVAPPPSSSTGS. Asn-140 carries an N-linked (GlcNAc...) asparagine glycan. The GPI-anchor amidated serine moiety is linked to residue Ser-168. A propeptide spans 169–193 (removed in mature form); that stretch reads SGSKSEIQLTIFALAAILPAALLLI.

It belongs to the plant LTP family.

Its subcellular location is the cell membrane. Its function is as follows. Probable lipid transfer protein. The chain is Non-specific lipid transfer protein GPI-anchored 10 from Arabidopsis thaliana (Mouse-ear cress).